A 283-amino-acid polypeptide reads, in one-letter code: Protoheme IX farnesyltransferase 1 (283 aa).

Transmembrane regions (helical) follow at residues 14–34 (IALMIALTAITGYGAVATKVD), 35–55 (PVALLLLTLAMILGSAASAVF), 84–104 (LGFALAVVLMVAGMALANAAF), 107–127 (VVALHLFLGGFVYVAIYTVWL), 133–153 (TNIIIGGAAGSFAVLAGAAAV), 163–183 (VLALVLFLWTPSHFWSLAILL), 208–228 (ILANTVILVGASLLPWGLGLL), 231–251 (VYGFVAAVSGAVLLGFNVVLV), and 258–278 (WAGWNFAASMPYLLLLFIAVF).

Belongs to the UbiA prenyltransferase family. Protoheme IX farnesyltransferase subfamily.

Its subcellular location is the cell inner membrane. It catalyses the reaction heme b + (2E,6E)-farnesyl diphosphate + H2O = Fe(II)-heme o + diphosphate. It participates in porphyrin-containing compound metabolism; heme O biosynthesis; heme O from protoheme: step 1/1. Its function is as follows. Converts heme B (protoheme IX) to heme O by substitution of the vinyl group on carbon 2 of heme B porphyrin ring with a hydroxyethyl farnesyl side group. In Paramagnetospirillum magneticum (strain ATCC 700264 / AMB-1) (Magnetospirillum magneticum), this protein is Protoheme IX farnesyltransferase 1.